Reading from the N-terminus, the 170-residue chain is Protein ECM34 (170 aa).

Asn45 carries an N-linked (GlcNAc...) asparagine glycan. The next 2 membrane-spanning stretches (helical) occupy residues 51–71 and 98–118; these read IWLL…GIGG and TIVI…FKMY.

This sequence belongs to the DUP/COS family.

Its subcellular location is the membrane. Its function is as follows. May be involved in cell wall organization and biogenesis. This is Protein ECM34 (ECM34) from Saccharomyces cerevisiae (strain ATCC 204508 / S288c) (Baker's yeast).